A 396-amino-acid chain; its full sequence is S-adenosylmethionine synthase 3 (396 aa).

E13 provides a ligand contact to Mg(2+). Residue H19 participates in ATP binding. E47 contacts K(+). L-methionine is bound by residues E60 and Q103. ATP-binding positions include 171–173 (DGK), 239–242 (SGRF), D250, 256–257 (RK), A273, K277, and K281. D250 is a binding site for L-methionine. Position 281 (K281) interacts with L-methionine.

The protein belongs to the AdoMet synthase family. In terms of assembly, homotetramer. Requires Mn(2+) as cofactor. Mg(2+) is required as a cofactor. Co(2+) serves as cofactor. It depends on K(+) as a cofactor. As to expression, expressed in roots, stems and leaves (at protein level).

The protein localises to the cytoplasm. It carries out the reaction L-methionine + ATP + H2O = S-adenosyl-L-methionine + phosphate + diphosphate. Its pathway is amino-acid biosynthesis; S-adenosyl-L-methionine biosynthesis; S-adenosyl-L-methionine from L-methionine: step 1/1. Functionally, catalyzes the formation of S-adenosylmethionine from methionine and ATP. The reaction comprises two steps that are both catalyzed by the same enzyme: formation of S-adenosylmethionine (AdoMet) and triphosphate, and subsequent hydrolysis of the triphosphate. May be involved in the synthesis of betain in response to abiotic stress such as high salinity. The sequence is that of S-adenosylmethionine synthase 3 (SAMS3) from Atriplex nummularia (Old man saltbush).